The primary structure comprises 193 residues: Putative 3-methyladenine DNA glycosylase (193 aa).

The protein belongs to the DNA glycosylase MPG family.

This is Putative 3-methyladenine DNA glycosylase from Agrobacterium fabrum (strain C58 / ATCC 33970) (Agrobacterium tumefaciens (strain C58)).